The primary structure comprises 179 residues: uncharacterized protein (179 aa).

Residues 1-10 (ATLSAGQPAS) show a composition bias toward polar residues. Disordered stretches follow at residues 1 to 35 (ATLS…RGKC), 59 to 80 (VRRN…PIVT), and 131 to 179 (ECPT…STCR). Residues 23-33 (LHRHPAPKRRG) are compositionally biased toward basic residues. Residues 149-158 (TPSRVRRSRR) show a composition bias toward basic residues.

This is an uncharacterized protein from Human cytomegalovirus (strain AD169) (HHV-5).